Consider the following 581-residue polypeptide: Frizzled-3 (581 aa).

The N-terminal stretch at 1–19 (MYAASILILHLTWAVATIA) is a signal peptide. The Extracellular portion of the chain corresponds to 20 to 237 (ANGAGHNGPV…TSSQKKTSET (218 aa)). One can recognise an FZ domain in the interval 35–156 (PNGLQCQPIA…PEKHELCMQI (122 aa)). Disulfide bonds link C40-C101, C48-C94, C85-C123, C112-C153, and C116-C141. N54 carries N-linked (GlcNAc...) asparagine glycosylation. The N-linked (GlcNAc...) asparagine glycan is linked to N206. The chain crosses the membrane as a helical span at residues 238 to 258 (LILGLSAVCFVLTLFALVTFW). Over 259 to 270 (AEPTRFGYPERP) the chain is Cytoplasmic. The chain crosses the membrane as a helical span at residues 271–291 (VLFLCLCYNLFSVCYLERIVF). The Extracellular portion of the chain corresponds to 292-321 (HNQARMHDVELQGRLMRPGCLLTPPCLASY). Residues 322–342 (ITTSYLSLCAASWWLIFALCF) traverse the membrane as a helical segment. Residues 343–359 (YLSSHKKWSSEALEKRS) are Cytoplasmic-facing. Residues 360–380 (GLFHVLAWVPPLAPPIAALLL) form a helical membrane-spanning segment. Over 381–393 (EKVRPSELTGMCY) the chain is Extracellular. The chain crosses the membrane as a helical span at residues 394–414 (APGFVELPALVLLLLGLYFTL). Residues 415–442 (RASRSLLSLQQQLQPTLAHHRFGQIRKR) lie on the Cytoplasmic side of the membrane. A helical membrane pass occupies residues 443-463 (FVLFSLLYFAPTTAGVVAALC). The Extracellular segment spans residues 464-488 (ERYADSVPSCSTPDDCLSPTPLSAW). Residues 489 to 509 (PALVRIFFQLVGGTLTGLWVW) traverse the membrane as a helical segment. The Cytoplasmic segment spans residues 510–581 (SRKTCESYRN…PVYNPNQSRV (72 aa)). Residues 579-581 (SRV) carry the PDZ-binding motif.

This sequence belongs to the G-protein coupled receptor Fz/Smo family. In terms of tissue distribution, wing, leg and eye imaginal disks. In embryos, expressed is seen in brain, proventriculus, Malpighian tubules, anal plate and visceral mesoderm of parasegment 8.

Its subcellular location is the membrane. Receptor for Wnt proteins. Most of frizzled receptors are coupled to the beta-catenin canonical signaling pathway, which leads to the activation of disheveled proteins, inhibition of GSK-3 kinase, nuclear accumulation of beta-catenin and activation of Wnt target genes. A second signaling pathway involving PKC and calcium fluxes has been seen for some family members, but it is not yet clear if it represents a distinct pathway or if it can be integrated in the canonical pathway, as PKC seems to be required for Wnt-mediated inactivation of GSK-3 kinase. Both pathways seem to involve interactions with G-proteins. Required to coordinate the cytoskeletons of epidermal cells to produce a parallel array of cuticular hairs and bristles. The polypeptide is Frizzled-3 (fz3) (Drosophila melanogaster (Fruit fly)).